The following is a 468-amino-acid chain: F-box/LRR-repeat protein At4g14096 (468 aa).

In terms of domain architecture, F-box spans R7–P60. LRR repeat units follow at residues V114–S136, T138–S167, Y169–D194, S216–D241, T292–S323, and N324–G349.

This is F-box/LRR-repeat protein At4g14096 from Arabidopsis thaliana (Mouse-ear cress).